The sequence spans 144 residues: Ribosomal RNA large subunit methyltransferase H (144 aa).

S-adenosyl-L-methionine is bound by residues Leu63, Gly92, and 111-116 (LSPLTF).

Belongs to the RNA methyltransferase RlmH family. Homodimer.

It is found in the cytoplasm. It carries out the reaction pseudouridine(1915) in 23S rRNA + S-adenosyl-L-methionine = N(3)-methylpseudouridine(1915) in 23S rRNA + S-adenosyl-L-homocysteine + H(+). Specifically methylates the pseudouridine at position 1915 (m3Psi1915) in 23S rRNA. The protein is Ribosomal RNA large subunit methyltransferase H of Synechococcus sp. (strain CC9902).